The following is a 235-amino-acid chain: Large ribosomal subunit protein uL1 (235 aa).

The protein belongs to the universal ribosomal protein uL1 family. Part of the 50S ribosomal subunit.

Functionally, binds directly to 23S rRNA. The L1 stalk is quite mobile in the ribosome, and is involved in E site tRNA release. In terms of biological role, protein L1 is also a translational repressor protein, it controls the translation of the L11 operon by binding to its mRNA. This is Large ribosomal subunit protein uL1 from Mycolicibacterium smegmatis (strain ATCC 700084 / mc(2)155) (Mycobacterium smegmatis).